Here is a 486-residue protein sequence, read N- to C-terminus: Cobyric acid synthase (486 aa).

Residues 248–439 enclose the GATase cobBQ-type domain; sequence MLRVVVPVLP…VHGLFDTPAA (192 aa). Catalysis depends on cysteine 329, which acts as the Nucleophile. The active site involves histidine 431.

It belongs to the CobB/CobQ family. CobQ subfamily.

It functions in the pathway cofactor biosynthesis; adenosylcobalamin biosynthesis. Catalyzes amidations at positions B, D, E, and G on adenosylcobyrinic A,C-diamide. NH(2) groups are provided by glutamine, and one molecule of ATP is hydrogenolyzed for each amidation. This chain is Cobyric acid synthase, found in Paraburkholderia phytofirmans (strain DSM 17436 / LMG 22146 / PsJN) (Burkholderia phytofirmans).